The primary structure comprises 375 residues: Cell division protein ZapE (375 aa).

78 to 85 (GGVGRGKT) provides a ligand contact to ATP.

Belongs to the AFG1 ATPase family. ZapE subfamily. In terms of assembly, interacts with FtsZ.

The protein resides in the cytoplasm. In terms of biological role, reduces the stability of FtsZ polymers in the presence of ATP. The sequence is that of Cell division protein ZapE from Escherichia coli O157:H7.